We begin with the raw amino-acid sequence, 292 residues long: Elongation factor Ts (292 aa).

Positions 82–85 (TDFV) are involved in Mg(2+) ion dislocation from EF-Tu.

The protein belongs to the EF-Ts family.

It is found in the cytoplasm. Functionally, associates with the EF-Tu.GDP complex and induces the exchange of GDP to GTP. It remains bound to the aminoacyl-tRNA.EF-Tu.GTP complex up to the GTP hydrolysis stage on the ribosome. This Legionella pneumophila (strain Lens) protein is Elongation factor Ts.